We begin with the raw amino-acid sequence, 89 residues long: Small ribosomal subunit protein uS17 (89 aa).

The protein belongs to the universal ribosomal protein uS17 family. In terms of assembly, part of the 30S ribosomal subunit.

In terms of biological role, one of the primary rRNA binding proteins, it binds specifically to the 5'-end of 16S ribosomal RNA. In Polaromonas naphthalenivorans (strain CJ2), this protein is Small ribosomal subunit protein uS17.